The primary structure comprises 576 residues: Zinc finger protein 791 (576 aa).

Residues 4–90 (VAFKDVSVSF…AETFSPNLSV (87 aa)) form the KRAB domain. 17 consecutive C2H2-type zinc fingers follow at residues 100–122 (YECT…MRSH), 132–154 (YKCK…ERSH), 160–182 (YKCK…EQTH), 188–210 (YECK…ERIH), 216–238 (YECK…ERTH), 244–266 (YACK…MITH), 272–294 (YKCK…ERIH), 300–322 (YTCK…ERIH), 328–350 (YKCK…VRVH), 356–378 (YKCK…ERTH), 384–406 (YECK…KRNH), 412–434 (YECK…MITH), 440–462 (YKCR…ERTH), 468–490 (YECK…KRTH), 496–518 (YECK…MRMH), 524–546 (YKCK…TRIH), and 552–574 (LECK…MRMH).

The protein belongs to the krueppel C2H2-type zinc-finger protein family.

It is found in the nucleus. Functionally, may be involved in transcriptional regulation. This chain is Zinc finger protein 791 (ZNF791), found in Pongo abelii (Sumatran orangutan).